The chain runs to 713 residues: Catalase-peroxidase (713 aa).

The segment at residues 77-200 (WHSAGTYRTT…LGATVMGLIY (124 aa)) is a cross-link (tryptophyl-tyrosyl-methioninium (Trp-Tyr) (with M-226)). Catalysis depends on His78, which acts as the Proton acceptor. A cross-link (tryptophyl-tyrosyl-methioninium (Tyr-Met) (with W-77)) is located at residues 200 to 226 (YVNPEGPDGEPDLEGSAANIRESFGRM). His241 is a binding site for heme b.

This sequence belongs to the peroxidase family. Peroxidase/catalase subfamily. In terms of assembly, homodimer or homotetramer. Heme b serves as cofactor. Post-translationally, formation of the three residue Trp-Tyr-Met cross-link is important for the catalase, but not the peroxidase activity of the enzyme.

It catalyses the reaction H2O2 + AH2 = A + 2 H2O. It carries out the reaction 2 H2O2 = O2 + 2 H2O. In terms of biological role, bifunctional enzyme with both catalase and broad-spectrum peroxidase activity. This is Catalase-peroxidase from Natronomonas pharaonis (strain ATCC 35678 / DSM 2160 / CIP 103997 / JCM 8858 / NBRC 14720 / NCIMB 2260 / Gabara) (Halobacterium pharaonis).